A 358-amino-acid polypeptide reads, in one-letter code: UDP-N-acetylglucosamine--N-acetylmuramyl-(pentapeptide) pyrophosphoryl-undecaprenol N-acetylglucosamine transferase (358 aa).

UDP-N-acetyl-alpha-D-glucosamine contacts are provided by residues 11–13 (TGG), N120, R161, S188, and Q282.

It belongs to the glycosyltransferase 28 family. MurG subfamily.

It is found in the cell inner membrane. The enzyme catalyses di-trans,octa-cis-undecaprenyl diphospho-N-acetyl-alpha-D-muramoyl-L-alanyl-D-glutamyl-meso-2,6-diaminopimeloyl-D-alanyl-D-alanine + UDP-N-acetyl-alpha-D-glucosamine = di-trans,octa-cis-undecaprenyl diphospho-[N-acetyl-alpha-D-glucosaminyl-(1-&gt;4)]-N-acetyl-alpha-D-muramoyl-L-alanyl-D-glutamyl-meso-2,6-diaminopimeloyl-D-alanyl-D-alanine + UDP + H(+). It functions in the pathway cell wall biogenesis; peptidoglycan biosynthesis. Functionally, cell wall formation. Catalyzes the transfer of a GlcNAc subunit on undecaprenyl-pyrophosphoryl-MurNAc-pentapeptide (lipid intermediate I) to form undecaprenyl-pyrophosphoryl-MurNAc-(pentapeptide)GlcNAc (lipid intermediate II). In Synechococcus sp. (strain WH7803), this protein is UDP-N-acetylglucosamine--N-acetylmuramyl-(pentapeptide) pyrophosphoryl-undecaprenol N-acetylglucosamine transferase.